The primary structure comprises 2431 residues: MPSATGNGARAPIAIIGLACRFPGDASNPSKFWDLLKEGREAYSERTNRYNEDAFHYPGGDNRRQNVLPVKGGYMLKQDPYAWDAAFFNITAAEAIAFDPKQRIAMEVAYEAFENAGMTLQKVAGTQTACYIGTSMSDYRDSIVRDFGNYPKYHLLGTSDEMISNRISHFFDIHGPSATIETACSSSHVATHIACQSLQSGESEMALAGGVGMLLVPESTMQLNNLGFLSPFGQSRAFDETAGGYGRGEGCGMYVLKRLDKAIQDGDTIRAIIRGSGVNQDGWTQGVTMPSGDAQASLIKYVYESNGLDYGATQYVEAHGTGTQAGDPTEAAAIYRTIGQGGQKTNPWRKKLWIGSVKTNIGHLEAAAGAASVIKGVLAMEHGFIPPTIHFKKPNPAVKLEEWNLAVPTKLMPWPACQTRRMSTSAFGMGGTNAHIVLERPNDQALREMSNRSRPLVNGMGEGNNTKKRLFVFSSHDQAGFKRLADAFVEHLDRLGPAAASPEYLANLAYTIATARSGLSWRASCSAESAAELREQLLTTLGENATRASSGQQPRIGFVFTGQGAQWARMGIEMLERRVFGDSVARSAALLREMGCDWDPVTELARAQKEFRLGVPEISQPICTVLQIALVDELRSWGITPSKVVGHSSGEIAAAYCIGALSHSDALAAAYYRGKASAGIKQRQGGMMAVGCSPEAAKKLMTETSLRATVACVNSPSSVTLSGDVGTLEALRAVLEERGVFARRLKVEVAYHSPHMHSCSTEYTAAIQHLEARAAAAHDEEDDRQQRQSPIVMVSSVTGSEVDPEMLGPYYWVRNLISPVLFADAVKELVSPVGEEGNAVDMLVEIGPHSALQGPTEQTLSHHGIKNVRYLSMLTRGENALTTSLNLAAELFRRGVVVDVAKANDDTHCRLLTDLPPYPWNHSQTFRADSRIQRELVAQKFPTKSILGAELPSMDETERVWRGFIRLEEEPWLRDHTVGTTVLFPGAGVISMVLEAAQQMVEPGKTARAFTLRDISFMALMALTDGVATEVITHMRPHLMATTGSTPAAWWEFTVSSCTGVTGPLRNNCRGLISIAYEDTRSPHMIREDAGIEAARIADYHRILRECPETCSKERFYDRLAQSALRYGEIFRGVENCHPGNGKTAFEVKLTDIGETFTRGKLARPFLIHAAALDAVLQAWVGTTSNSNGPGSFGFDAPMLPKSISEMEISARIPAEVGYVMPGFSRSKRHGFNEWSADITMLDTGLSRVFLSIADFRLAELEVDDAAKPDRDTVDVDPAEIASEVHWNFALELLKPAEISRVVSSVGAETAHERLVELVRMAIHQRPAVDVIELVASAEELPDAVMSKLPQGIILPTQVRYGVVKGSADSTHAANIKEDILGRPFALGAPLAADTAPADLFVIPHRVSKNPKDLDTVWESLACLTKSDATILMVAAAAATTTDNGPISSTAPELVAAKGFELISCTPTSTDSLALYHYATKKNTQPERLTNGSVGERVVILEPYKSSTAIRTFSNELRELLEDQGYVVSTRTDIVGARADAGVGASLSAKTCVSLLELEQPVLDNLSEADFQSIRALILNCERLLWVTRGDSPSMRLVDGFARCIRNEIAGIKFQLLHLSSGEGPQHGPGLAARILLAPTADNEFREHDGLLQVSRIYRSLAENDQIRNHLHDSVRVASLPSGNFQDGKSMAGAPPLRLSIGRPGLLNTLHFVPEEESTALAPLADNEVELEVRASGINFRDIMGSMGLLAVTGIGQEASGVVVRTGRLGAEAASLKPGDRVSTLTAGGTHATRIRCDYRVAQRVPEAMSFEEAAGVPVTHCTAYYALVRLANLRRGQSVLVHAAAGGTGQAAVQLAKHMGLVVYATVGTDKKRRLMMEEYGIPEEHIFSSRDGSFVKGIKRITGGRGVDCVLNSLSGELLRLSFSCLATFGTFVEIGLRDITDNMRLDMRPFAKSTTFSFINMVTLLQQDPDTLGEILGEVFKLLREGILRPAQPVTVYPVGQVEEAFRTMQQGKHLGKMILSFTADHGRAPILYRAKDSLKLDPNATYLIVGGLGGLGRSLAMEFAASGARYIAFLSRSGDAKPEARAVIDQLAARGVQARVYRADVADEASFLQAMEDCTQQLPPIKGVVQMAMVLRDVVFEKMKYEEWATGLRPKVQGTWNLHQYFDHERPLDFMIFCSSIAGVFGNPSQAQYAAGNTYQDALASYHRARGLKAVSVNLGIMRDVGVIAEGDSHFMQTWEPVLGIREPAFRALMKSLINGQVQHEHHDGRWPCPPQVCVGLGTGDILATHNLARPAYFEDPRFGPLAVTSVTAAGSSSSGDGATVSLASRLSEVSTNKDPAVAAAIITEALVKTMADILRIPPSEVDPSRPMYRYGVDSLVALEVRNWITKEMKANMTLMEILAAVPMETFAVQIAKKSKLLVGLAA.

In terms of domain architecture, Ketosynthase family 3 (KS3) spans 10–440 (RAPIAIIGLA…GTNAHIVLER (431 aa)). Catalysis depends on for beta-ketoacyl synthase activity residues Cys-184, His-319, and His-363. The interval 558–895 (FVFTGQGAQW…NLAAELFRRG (338 aa)) is malonyl-CoA:ACP transacylase (MAT) domain. Positions 944–1080 (KSILGAELPS…GLISIAYEDT (137 aa)) are N-terminal hotdog fold. In terms of domain architecture, PKS/mFAS DH spans 944–1267 (KSILGAELPS…LAELEVDDAA (324 aa)). The interval 946-1264 (ILGAELPSMD…DFRLAELEVD (319 aa)) is dehydratase (DH) domain. The Proton acceptor; for dehydratase activity role is filled by His-976. A C-terminal hotdog fold region spans residues 1108-1267 (PETCSKERFY…LAELEVDDAA (160 aa)). The Proton donor; for dehydratase activity role is filled by Asp-1174. Positions 1705–2023 (GLLNTLHFVP…QGKHLGKMIL (319 aa)) are enoyl reductase (ER) domain. Catalysis depends on Cys-1822, which acts as the Phosphocysteine intermediate. The interval 2048 to 2228 (ATYLIVGGLG…VSVNLGIMRD (181 aa)) is ketoreductase (KR) domain. Positions 2346 to 2423 (VAAAIITEAL…TFAVQIAKKS (78 aa)) constitute a Carrier domain. Position 2383 is an O-(pantetheine 4'-phosphoryl)serine (Ser-2383).

The protein operates within secondary metabolite biosynthesis. Reducing polyketide synthase; part of the gene cluster that mediates the biosynthesis of radicicol, a resorcylic acid lactone (RAL) that irreversibly inhibits the HSP90 molecular chaperone, an important target for cancer chemotherapy. The cluster encodes only two apparent post-PKS enzymes, a cytochrome P450 monooxygenase (radP) and a non-heme halogenase (radH) that introduce the epoxide and the chlorine, respectively. If this cluster includes all the genes required for radicicol biosynthesis, the remaining structural features of radicicol are presumably generated by the PKSs rads1 and rads2. The C-2' ketone could arise if the R-PKS rads1 and NR-PKS rads2 each carry out four iterations, in contrast to the five iteration-three iteration split for the hypothemycin PKSs. The origin of the cis 5',6' double bond is not known. The radicicol R-PKS radS1 ER domain may catalyze either double bond isomerization or reduction in the third iteration. The chain is Reducing polyketide synthase rads1 from Floropilus chiversii (Chaetomium chiversii).